The primary structure comprises 129 residues: MTTDVIADMLTRIRNANQRYLKTVSVPSSKVKLEIARILKEEGFISNFTVEGDVKKTINIELKYQGKTRVIQGLKKISKPGLRVYAQANEIPQVLNGLGISIVSTSQGIMTGKKARLANAGGEVLAFIW.

The protein belongs to the universal ribosomal protein uS8 family. Part of the 30S ribosomal subunit. Contacts proteins S5 and S12.

In terms of biological role, one of the primary rRNA binding proteins, it binds directly to 16S rRNA central domain where it helps coordinate assembly of the platform of the 30S subunit. This Mycoplasma mycoides subsp. mycoides SC (strain CCUG 32753 / NCTC 10114 / PG1) protein is Small ribosomal subunit protein uS8.